The primary structure comprises 288 residues: MTDRWLVTGAAGMLGRDLVALLRGLNEPVVAITRHDLDITDRLSVRAVVDRHRPTTIVNCAAWTRFGEAEAGESAALLVNGGGARELAAVCRDRSIRLVHLSTDYVFDGTSRRPYAESAVTSPINAYGRTKQAGEQAVLDLLPDDGTIVRTAWLYGRHGMNFIRKMVRLEQLRETVDVVDDQWGQPTWTVDLAQQIVALVRHGASGVFHGTSAGEATWYDLARMTFRLLGADPGRVRPVPSDRIAGGELRPRYTVLGHDAWREAGLTPIRHWTTALTQAFPLLNADES.

Residues 12 to 14 (GML), 38 to 39 (DI), 62 to 64 (AWT), Tyr127, and Lys131 contribute to the NADH site. NADPH contacts are provided by residues 13–14 (ML), 38–39 (DI), 62–64 (AWT), Tyr127, and Lys131. Tyr127 serves as the catalytic Proton donor/acceptor.

This sequence belongs to the dTDP-4-dehydrorhamnose reductase family. Requires Mg(2+) as cofactor.

The protein operates within antibiotic biosynthesis; novobiocin biosynthesis. Functionally, reduces the product formed from the reaction of NovW with dTDP-4-keto-6-deoxy-D-glucose to result in dTDP-5-methyl-L-rhamnose in the novobiocin biosynthesis pathway, an aminocoumarin family antibiotic that targets bacterial DNA gyrases. The chain is dTDP-4-keto-6-deoxy-D-glucose reductase (novS) from Streptomyces niveus (Streptomyces spheroides).